Consider the following 523-residue polypeptide: ATP synthase subunit beta, mitochondrial (523 aa).

A mitochondrion-targeting transit peptide spans 1 to 19 (MFSRVAKTSFSAVRAAKSQ). Position 201–208 (201–208 (GGAGVGKT)) interacts with ATP.

It belongs to the ATPase alpha/beta chains family. In terms of assembly, F-type ATPases have 2 components, CF(1) - the catalytic core - and CF(0) - the membrane proton channel. CF(1) has five subunits: alpha(3), beta(3), gamma(1), delta(1), epsilon(1). CF(0) has three main subunits: a, b and c.

Its subcellular location is the mitochondrion. The protein localises to the mitochondrion inner membrane. The catalysed reaction is ATP + H2O + 4 H(+)(in) = ADP + phosphate + 5 H(+)(out). Functionally, mitochondrial membrane ATP synthase (F(1)F(0) ATP synthase or Complex V) produces ATP from ADP in the presence of a proton gradient across the membrane which is generated by electron transport complexes of the respiratory chain. F-type ATPases consist of two structural domains, F(1) - containing the extramembraneous catalytic core, and F(0) - containing the membrane proton channel, linked together by a central stalk and a peripheral stalk. During catalysis, ATP synthesis in the catalytic domain of F(1) is coupled via a rotary mechanism of the central stalk subunits to proton translocation. Subunits alpha and beta form the catalytic core in F(1). Rotation of the central stalk against the surrounding alpha(3)beta(3) subunits leads to hydrolysis of ATP in three separate catalytic sites on the beta subunits. The sequence is that of ATP synthase subunit beta, mitochondrial from Hemicentrotus pulcherrimus (Sea urchin).